The following is a 347-amino-acid chain: Biotin synthase (347 aa).

The Radical SAM core domain maps to 40 to 258; it reads AQVQVSTLLS…IAVARIVMPR (219 aa). [4Fe-4S] cluster contacts are provided by Cys-55, Cys-59, and Cys-62. Cys-99, Cys-130, Cys-190, and Arg-262 together coordinate [2Fe-2S] cluster.

The protein belongs to the radical SAM superfamily. Biotin synthase family. As to quaternary structure, homodimer. Requires [4Fe-4S] cluster as cofactor. The cofactor is [2Fe-2S] cluster.

The catalysed reaction is (4R,5S)-dethiobiotin + (sulfur carrier)-SH + 2 reduced [2Fe-2S]-[ferredoxin] + 2 S-adenosyl-L-methionine = (sulfur carrier)-H + biotin + 2 5'-deoxyadenosine + 2 L-methionine + 2 oxidized [2Fe-2S]-[ferredoxin]. It functions in the pathway cofactor biosynthesis; biotin biosynthesis; biotin from 7,8-diaminononanoate: step 2/2. Functionally, catalyzes the conversion of dethiobiotin (DTB) to biotin by the insertion of a sulfur atom into dethiobiotin via a radical-based mechanism. The chain is Biotin synthase from Stenotrophomonas maltophilia (strain R551-3).